We begin with the raw amino-acid sequence, 348 residues long: Zinc finger protein 843 (348 aa).

A C2H2-type 1 zinc finger spans residues 33–55 (CKCKACGRGFTQSASLLQHWRVH). A C2H2-type 2; degenerate zinc finger spans residues 145-167 (FCCCSCGDSVNEKTSLSQRVLPH). Polar residues predominate over residues 184-195 (APSSVAPDSTSG). Disordered regions lie at residues 184-203 (APSS…GSPG) and 256-329 (ATQP…WRGA).

This is Zinc finger protein 843 (ZNF843) from Homo sapiens (Human).